Here is a 529-residue protein sequence, read N- to C-terminus: Bifunctional purine biosynthesis protein PurH (529 aa).

The MGS-like domain maps to 1-148; that stretch reads MQQPRPIRRA…KNHKDVAIVV (148 aa).

It belongs to the PurH family.

It catalyses the reaction (6R)-10-formyltetrahydrofolate + 5-amino-1-(5-phospho-beta-D-ribosyl)imidazole-4-carboxamide = 5-formamido-1-(5-phospho-D-ribosyl)imidazole-4-carboxamide + (6S)-5,6,7,8-tetrahydrofolate. It carries out the reaction IMP + H2O = 5-formamido-1-(5-phospho-D-ribosyl)imidazole-4-carboxamide. It participates in purine metabolism; IMP biosynthesis via de novo pathway; 5-formamido-1-(5-phospho-D-ribosyl)imidazole-4-carboxamide from 5-amino-1-(5-phospho-D-ribosyl)imidazole-4-carboxamide (10-formyl THF route): step 1/1. Its pathway is purine metabolism; IMP biosynthesis via de novo pathway; IMP from 5-formamido-1-(5-phospho-D-ribosyl)imidazole-4-carboxamide: step 1/1. The polypeptide is Bifunctional purine biosynthesis protein PurH (Serratia proteamaculans (strain 568)).